Here is a 376-residue protein sequence, read N- to C-terminus: D-alanine--D-alanine ligase (376 aa).

One can recognise an ATP-grasp domain in the interval 155–361 (KIIFEKAGIP…YPELIEKLID (207 aa)). An ATP-binding site is contributed by 188–243 (EEKFSYPVFVKPSNAGSSVGVSKAHDKNELKEALIYAARYDRKVLIEEFINGREVE). Residues aspartate 314, glutamate 328, and asparagine 330 each coordinate Mg(2+).

Belongs to the D-alanine--D-alanine ligase family. The cofactor is Mg(2+). Requires Mn(2+) as cofactor.

Its subcellular location is the cytoplasm. It catalyses the reaction 2 D-alanine + ATP = D-alanyl-D-alanine + ADP + phosphate + H(+). It functions in the pathway cell wall biogenesis; peptidoglycan biosynthesis. Cell wall formation. The polypeptide is D-alanine--D-alanine ligase (Acetivibrio thermocellus (strain ATCC 27405 / DSM 1237 / JCM 9322 / NBRC 103400 / NCIMB 10682 / NRRL B-4536 / VPI 7372) (Clostridium thermocellum)).